A 159-amino-acid chain; its full sequence is Transcriptional repressor NrdR (159 aa).

Residues Cys3 to Cys34 fold into a zinc finger. The region spanning Leu49–Val139 is the ATP-cone domain.

This sequence belongs to the NrdR family. Zn(2+) is required as a cofactor.

In terms of biological role, negatively regulates transcription of bacterial ribonucleotide reductase nrd genes and operons by binding to NrdR-boxes. This Brevibacillus brevis (strain 47 / JCM 6285 / NBRC 100599) protein is Transcriptional repressor NrdR.